Reading from the N-terminus, the 402-residue chain is CMP-sialic acid transporter 3 (402 aa).

The Cytoplasmic portion of the chain corresponds to 1–42; that stretch reads MSGEVECRVCHAKVQVPMAAAAVSKAYDIHRSSVSSRQRALN. A helical transmembrane segment spans residues 43–63; it reads VLLVSGDCVLAGLQPILVYMC. Topologically, residues 64–73 are lumenal; it reads KVDGKFKFSP. A helical membrane pass occupies residues 74-94; the sequence is VSVNFLTEITKIIFAIIMLCI. Residues 95 to 118 are Cytoplasmic-facing; sequence QARRLKVGEKPFLTVSTFMQAARN. Residues 119–139 form a helical membrane-spanning segment; it reads NVLLAVPALFYAINNYMKFVM. The Lumenal segment spans residues 140–146; that stretch reads QLYFNPA. The helical transmembrane segment at 147-167 threads the bilayer; the sequence is TVKMLGNLKVLVIAVLLKVIM. Residues 168–170 are Cytoplasmic-facing; it reads RRR. The helical transmembrane segment at 171–191 threads the bilayer; the sequence is FSTIQWEALALLLIGISVNQL. Over 192-202 the chain is Lumenal; it reads KSLPEGSSTLG. Residues 203–223 traverse the membrane as a helical segment; the sequence is LPVAAGAYLYTLFFVTVPALA. At 224–243 the chain is on the cytoplasmic side; it reads SVYNEKALKSQFDTSIYLQN. Residues 244–264 traverse the membrane as a helical segment; it reads LFLYGYGAIFNFLGLVITAII. Over 265–280 the chain is Lumenal; that stretch reads QGPSSFNILEGHSKAT. Residues 281–301 form a helical membrane-spanning segment; the sequence is MFLICNNAAQGILSSFFFKYA. Over 302 to 321 the chain is Cytoplasmic; that stretch reads DTILKKYSSTIATIFTGVAS. Residues 322–342 form a helical membrane-spanning segment; sequence AVLFGHTLTINFVLAISIVII. Topologically, residues 343–402 are lumenal; it reads SMHQYLSNQIKDEVPSSKIEMGDAHEHRSKESVVVNVSDSIATEAKHRHGTDERQPLLPV.

The protein belongs to the nucleotide-sugar transporter family. CMP-Sialate:CMP antiporter (TC 2.A.7.12) subfamily.

It localises to the golgi apparatus membrane. Sugar transporter involved in the transport of CMP-sialic acid from the cytoplasm into the Golgi. May transport important nucleotide sugars such as CMP-Kdo (2-keto-3-deoxy-D-manno-octulosonic acid) in physiological conditions. The chain is CMP-sialic acid transporter 3 from Oryza sativa subsp. indica (Rice).